A 1366-amino-acid polypeptide reads, in one-letter code: Agglutinin-like protein 6 (1366 aa).

The signal sequence occupies residues 1–18 (MKTVILLHLFFYCTIAMA). Cystine bridges form between C74/C151, C97/C113, C206/C301, and C228/C257. N-linked (GlcNAc...) asparagine glycosylation occurs at N294. ALS repeat units follow at residues 368 to 399 (TTIT…VDVP), 404 to 435 (TTIT…VQVP), 441 to 472 (VTTT…IKEP), 477 to 508 (VTTT…VREP), 513 to 544 (VTTT…VREP), and 549 to 580 (VTTT…IHDP). The interval 449–470 (GSVPTTETVTTGPQGTDSVIIK) is disordered. Positions 451-464 (VPTTETVTTGPQGT) are enriched in low complexity. 3 disordered regions span residues 583-658 (ESSS…TSES), 758-780 (LSSD…FPHT), and 804-833 (VSLT…SDQS). N-linked (GlcNAc...) asparagine glycosylation occurs at N596. Low complexity-rich tracts occupy residues 758-775 (LSSD…SPSD) and 805-833 (SLTS…SDQS). N-linked (GlcNAc...) asparagine glycosylation occurs at N866. Disordered regions lie at residues 874–915 (ESES…STVT), 928–976 (TGMP…TSAS), 996–1040 (SETS…KESS), 1081–1130 (EDNE…VSSV), and 1158–1218 (ETSL…STNN). 3 stretches are compositionally biased toward low complexity: residues 875–889 (SESS…ASES), 898–915 (SEST…STVT), and 940–958 (TSDV…PTSA). Polar residues predominate over residues 959–969 (EQSITDNPNID). A compositionally biased stretch (low complexity) spans 996-1021 (SETSTLSSDDSTSSDTSISSTTNSDT). 2 stretches are compositionally biased toward polar residues: residues 1022-1040 (GNIN…KESS) and 1085-1107 (PNTF…SVLS). Composition is skewed to low complexity over residues 1121-1130 (VTDTTTVSSV) and 1158-1177 (ETSL…SSGT). Composition is skewed to polar residues over residues 1192–1202 (TSTDNRLSYST) and 1209–1218 (TYANSGSTNN). N1273 is a glycosylation site (N-linked (GlcNAc...) asparagine). S1345 carries the GPI-anchor amidated serine lipid modification. A propeptide spans 1346-1366 (SATKHPSWLLKFISVALFFFL) (removed in mature form).

Belongs to the ALS family. The GPI-anchor is attached to the protein in the endoplasmic reticulum and serves to target the protein to the cell surface. There, the glucosamine-inositol phospholipid moiety is cleaved off and the GPI-modified mannoprotein is covalently attached via its lipidless GPI glycan remnant to the 1,6-beta-glucan of the outer cell wall layer.

It is found in the cell membrane. Its subcellular location is the secreted. It localises to the cell wall. Functionally, cell surface adhesion protein which mediates both yeast-to-host tissue adherence and yeast aggregation. Plays an important role in the pathogenesis of C.albicans infections. This Candida albicans (strain SC5314 / ATCC MYA-2876) (Yeast) protein is Agglutinin-like protein 6 (ALS6).